Here is a 336-residue protein sequence, read N- to C-terminus: Nicotinate-nucleotide--dimethylbenzimidazole phosphoribosyltransferase (336 aa).

The active-site Proton acceptor is E304.

Belongs to the CobT family.

It catalyses the reaction 5,6-dimethylbenzimidazole + nicotinate beta-D-ribonucleotide = alpha-ribazole 5'-phosphate + nicotinate + H(+). It participates in nucleoside biosynthesis; alpha-ribazole biosynthesis; alpha-ribazole from 5,6-dimethylbenzimidazole: step 1/2. Its function is as follows. Catalyzes the synthesis of alpha-ribazole-5'-phosphate from nicotinate mononucleotide (NAMN) and 5,6-dimethylbenzimidazole (DMB). The chain is Nicotinate-nucleotide--dimethylbenzimidazole phosphoribosyltransferase from Ruegeria sp. (strain TM1040) (Silicibacter sp.).